We begin with the raw amino-acid sequence, 331 residues long: Proline-rich protein 33 (331 aa).

Disordered regions lie at residues 1–112, 128–185, and 204–247; these read MGPQ…SVPR, SLES…PKVA, and APEP…APAS. The segment covering 94-105 has biased composition (pro residues); sequence PEEPPVPRPPPG. Residues 149–169 are compositionally biased toward low complexity; that stretch reads PPMAGPAAEAERVSSPAWASS. Positions 170–185 are enriched in pro residues; that stretch reads PTPPSGPHPCPVPKVA. Residues 217 to 238 show a composition bias toward low complexity; it reads EPEVPTPTEQEVPAPTEQEVPA.

This is Proline-rich protein 33 (PRR33) from Homo sapiens (Human).